A 172-amino-acid polypeptide reads, in one-letter code: Translationally-controlled tumor protein (172 aa).

In terms of domain architecture, TCTP spans 1–172 (MIIYRDLISH…FKDGLEMEKC (172 aa)). Serine 46 is modified (phosphoserine; by PLK1). Serine 53 carries the phosphoserine modification. Serine 64 is modified (phosphoserine; by PLK1). Positions 70 to 172 (VDIVMNHHLQ…FKDGLEMEKC (103 aa)) are required for reduction of TSC22D1 protein stability.

The protein belongs to the TCTP family. In terms of assembly, homodimer. Interacts with STEAP3. Interacts with TSC22D1; interaction results in the destabilization of TSC22D1 protein. Found in several healthy and tumoral cells including erythrocytes, hepatocytes, macrophages, platelets, keratinocytes, erythroleukemia cells, gliomas, melanomas, hepatoblastomas, and lymphomas. It cannot be detected in kidney and renal cell carcinoma (RCC). Expressed in placenta and prostate.

It is found in the cytoplasm. Functionally, involved in calcium binding and microtubule stabilization. Acts as a negative regulator of TSC22D1-mediated apoptosis, via interaction with and destabilization of TSC22D1 protein. This is Translationally-controlled tumor protein (TPT1) from Homo sapiens (Human).